We begin with the raw amino-acid sequence, 293 residues long: Probable metal transport system membrane protein CPn_0543/CP_0209/CPj0543/CpB0565 (293 aa).

7 helical membrane-spanning segments follow: residues 12–32 (LLILLPTFLAALGASVAGGVM), 41–61 (IVSISGSISHAILGGIGLTLW), 68–88 (LSFFPMYGAIVGAIFLALCIG), 101–121 (LIAMIWSVGMAIGIIFISRLP), 140–160 (PSDLYSLGIFDLLVLGIVVLC), 183–203 (LWYFLLLVLTAITIVMLIYVM), and 253–273 (FPVGPTISLLMGLGYTASLCV).

The protein belongs to the ABC-3 integral membrane protein family.

The protein resides in the cell inner membrane. Its function is as follows. Part of an ATP-driven transport system CPn_0541/CPn_0542/CPn_0543 for a metal. In Chlamydia pneumoniae (Chlamydophila pneumoniae), this protein is Probable metal transport system membrane protein CPn_0543/CP_0209/CPj0543/CpB0565.